The sequence spans 171 residues: Minor capsid protein 3 (171 aa).

Interacts with the major capsid protein.

It localises to the virion. In terms of biological role, one of the minor capsid proteins that constitute a network internal to the major capsid proteins and outside the lipid membrane. The minor capsid proteins glue and stabilize the capsomers. In Chlorella (PBCV-1), this protein is Minor capsid protein 3.